We begin with the raw amino-acid sequence, 2547 residues long: Piezo-type mechanosensitive ion channel component 1 (2547 aa).

At 1 to 12 (MEPHVLGAGLYW) the chain is on the cytoplasmic side. A helical transmembrane segment spans residues 13-25 (LLLPCTLLAASLL). At 26 to 28 (RFN) the chain is on the extracellular side. A helical membrane pass occupies residues 29–44 (ALSLVYLLFLLLLPWL). The Cytoplasmic portion of the chain corresponds to 45–58 (PGPSRHSIPGHTGR). Residues 59–81 (LLRALLCLSLLFLVAHLAFQICL) traverse the membrane as a helical segment. Topologically, residues 82 to 121 (HTVPHLDQFLGQNGSLWVKVSQHIGVTRLDLKDIFNTTRL) are extracellular. An N-linked (GlcNAc...) asparagine glycan is attached at N94. A helical membrane pass occupies residues 122 to 138 (VAPDLGVLLASSLCLGL). Residues 139-201 (CGRLTRKAGQ…ASRFRVTAHW (63 aa)) lie on the Cytoplasmic side of the membrane. A helical transmembrane segment spans residues 202–221 (LLMTSGRTLVIVLLALAGIA). At 222–223 (HP) the chain is on the extracellular side. A helical membrane pass occupies residues 224-243 (SAFSSIYLVVFLAICTWWSC). Residues 244-254 (HFPLSPLGFNT) are Cytoplasmic-facing. The chain crosses the membrane as a helical span at residues 255–275 (LCVMVSCFGAGHLICLYCYQT). Residues 276–316 (PFIQDMLPPGNIWARLFGLKNFVDLPNYSSPNALVLNTKHA) lie on the Extracellular side of the membrane. Residues 317–337 (WPIYVSPGILLLLYYTATSLL) form a helical membrane-spanning segment. Topologically, residues 338 to 424 (KLHKSCPSEL…EMSPLHGLGH (87 aa)) are cytoplasmic. Residues 347–387 (LRKETPREDEEHELELDHLEPEPQARDATQGEMPMTTEPDL) form a disordered region. Positions 361–371 (ELDHLEPEPQA) are enriched in basic and acidic residues. The chain crosses the membrane as a helical span at residues 425–445 (LIMDQSYVCALIAMMVWSIMY). Topologically, residues 446 to 447 (HS) are extracellular. A helical transmembrane segment spans residues 448–463 (WLTFVLLLWACLIWTV). Residues 464-468 (RSRHQ) are Cytoplasmic-facing. A helical transmembrane segment spans residues 469 to 491 (LAMLCSPCILLYGLTLCCLRYVW). Residues 492–518 (AMELPELPTTLGPVSLHQLGLEHTRYP) lie on the Extracellular side of the membrane. The chain crosses the membrane as a helical span at residues 519 to 536 (CLDLGAMLLYLLTFWLLL). At 537–580 (RQFVKEKLLKKQKVPAALLEVTVADTEPTQTQTLLRSLGELVTG) the chain is on the cytoplasmic side. The chain crosses the membrane as a helical span at residues 581–601 (IYVKYWIYVCAGMFIVVSFAG). Residue R602 is a topological domain, extracellular. Residues 603–623 (LVVYKIVYMFLFLLCLTLFQV) form a helical membrane-spanning segment. At 624–633 (YYTLWRKLLR) the chain is on the cytoplasmic side. Residues 634-655 (VFWWLVVAYTMLVLIAVYTFQF) traverse the membrane as a helical segment. Topologically, residues 656–685 (QDFPTYWRNLTGFTDEQLGDLGLEQFSVSE) are extracellular. A helical transmembrane segment spans residues 686–702 (LFSSILIPGFFLLACIL). Residues 703–811 (QLHYFHRPFM…RRLLELHVFK (109 aa)) lie on the Cytoplasmic side of the membrane. Residue S758 is modified to Phosphoserine. Residues 812 to 823 (LVALYTVWVALK) traverse the membrane as a helical segment. At 824-826 (EVS) the chain is on the extracellular side. The helical transmembrane segment at 827 to 840 (VMNLLLVVLWAFAL) threads the bilayer. The Cytoplasmic segment spans residues 841-854 (PYPRFRPMASCLST). Residues 855–869 (VWTCIIIVCKMLYQL) traverse the membrane as a helical segment. The Extracellular segment spans residues 870–921 (KIVNPHEYSSNCTEPFPNNTNLQPLEINQSLLYRGPVDPANWFGVRKGYPNL). The helical transmembrane segment at 922-949 (GYIQNHLQILLLLVFEAVVYRRQEHYRR) threads the bilayer. The Cytoplasmic portion of the chain corresponds to 950 to 989 (QHQQAPLPAQAVCADGTRQRLDQDLLSCLKYFINFFFYKF). A helical transmembrane segment spans residues 990–1005 (GLEICFLMAVNVIGQR). Residues 1006–1007 (MN) are Extracellular-facing. A helical transmembrane segment spans residues 1008–1023 (FMVILHGCWLVAILTR). The Cytoplasmic segment spans residues 1024–1036 (RRREAIARLWPNY). The helical transmembrane segment at 1037–1052 (CLFLTLFLLYQYLLCL) threads the bilayer. The Extracellular portion of the chain corresponds to 1053-1091 (GMPPALCIDYPWRWSKAIPMNSALIKWLYLPDFFRAPNS). Residues 1092-1113 (TNLISDFLLLLCASQQWQVFSA) traverse the membrane as a helical segment. Residues 1114–1148 (ERTEEWQRMAGINTDHLEPLRGEPNPIPNFIHCRS) are Cytoplasmic-facing. A helical transmembrane segment spans residues 1149–1175 (YLDMLKVAVFRYLFWLVLVVVFVAGAT). Residues 1176 to 1180 (RISIF) are Extracellular-facing. The chain crosses the membrane as a helical span at residues 1181-1199 (GLGYLLACFYLLLFGTTLL). The Cytoplasmic portion of the chain corresponds to 1200 to 1212 (QKDTRAQLVLWDC). Residues 1213-1231 (LILYNVTVIISKNMLSLLS) traverse the membrane as a helical segment. Over 1232–1280 (CVFVEQMQSNFCWVIQLFSLVCTVKGYYDPKEMMTRDRDCLLPVEEAGI) the chain is Extracellular. Residues 1281 to 1297 (IWDSICFFFLLLQRRIF) form a helical membrane-spanning segment. The Cytoplasmic portion of the chain corresponds to 1298-1656 (LSHYFLHVSA…ELLLDRRLHI (359 aa)). Positions 1334–1365 (HRQIEEKSLAQLKRQMKRIRAKQEKYRQSQAS) form a coiled coil. 3 disordered regions span residues 1354 to 1396 (AKQE…RRQW), 1456 to 1480 (RRERARQERAEQLASGGDLNPDVEP), and 1567 to 1610 (TLSG…NTRS). A compositionally biased stretch (polar residues) spans 1361–1372 (QSQASRGQLQSK). The span at 1376 to 1392 (DPSQEPGPDSPGGSSPP) shows a compositional bias: low complexity. S1385 and S1390 each carry phosphoserine. Residues 1592 to 1610 (SSMTDDTSSPLSTGYNTRS) are compositionally biased toward polar residues. Phosphoserine occurs at positions 1627, 1631, and 1646. A helical membrane pass occupies residues 1657-1700 (PELEEAERFEAQQGRTLRLLRAGYQCVAAHSELLCYFIIILNHM). At 1701–1704 (VTAS) the chain is on the extracellular side. A helical transmembrane segment spans residues 1705 to 1720 (AASLVLPVLVFLWAML). Topologically, residues 1721–1728 (TIPRPSKR) are cytoplasmic. Residues 1729-1747 (FWMTAIVFTEVMVVTKYLF) form a helical membrane-spanning segment. Topologically, residues 1748 to 1779 (QFGFFPWNSYVVLRRYENKPYFPPRILGLEKT) are extracellular. The chain crosses the membrane as a helical span at residues 1780–1801 (DSYIKYDLVQLMALFFHRSQLL). At 1802 to 1976 (CYGLWDHEED…HTKYRAATDV (175 aa)) the chain is on the cytoplasmic side. Basic and acidic residues-rich tracts occupy residues 1816 to 1837 (DHCRSSVKDREAKEEPEAKLES) and 1855 to 1880 (PRDHIQGKGSIRSKDVIQDPPEDLKP). The interval 1816-1931 (DHCRSSVKDR…RPRHTQEKSK (116 aa)) is disordered. Residues 1881 to 1894 (RHTRHISIRFRRRK) are compositionally biased toward basic residues. The span at 1912–1931 (GEGKETTERKRPRHTQEKSK) shows a compositional bias: basic and acidic residues. A helical transmembrane segment spans residues 1977-1996 (YALMFLADIVDIIIIIFGFW). The Extracellular portion of the chain corresponds to 1997–2016 (AFGKHSAATDIASSLSDDQV). A helical membrane pass occupies residues 2017-2033 (PQAFLFMLLVQFGTMVI). Topologically, residues 2034–2047 (DRALYLRKTVLGKL) are cytoplasmic. A helical membrane pass occupies residues 2048–2068 (AFQVVLVVAIHIWMFFILPAV). The Extracellular portion of the chain corresponds to 2069–2076 (TERMFSQN). Residues 2077-2092 (AVAQLWYFVKCIYFAL) form a helical membrane-spanning segment. The Cytoplasmic segment spans residues 2093–2192 (SAYQIRCGYP…KKKIVKYGMG (100 aa)). Residues 2193-2213 (GLIILFLIAIIWFPLLFMSLI) form a helical membrane-spanning segment. Topologically, residues 2214-2457 (RSVVGVVNQP…IFSDKVSPPS (244 aa)) are extracellular. Residues C2437 and C2441 are joined by a disulfide bond. Residues 2458–2478 (LGFLAGYGIVGLYVSIVLVVG) form a helical membrane-spanning segment. Residues 2479-2547 (KFVRGFFSEI…TMIKWTRERE (69 aa)) lie on the Cytoplasmic side of the membrane.

Belongs to the PIEZO (TC 1.A.75) family. In terms of assembly, homotrimer; the homotrimer forms a propeller-shaped Piezo channel with a cation-ion conducting pore. Heterotrimeric interaction may occur between PIEZO1 and PIEZO2. Interacts with PKD2. Interacts with STOMl3. Interacts with TMC1, TMC2, PCDG15 and CIB2; the interaction may be part of the MET complex. Interacts with MDFIC (via C-terminus); the interaction prolongs Piezo channel inactivation. Interacts with MDFI (via C-terminus); the interaction prolongs Piezo channel inactivation. As to expression, expressed in bladder, colon, kidney and skin. Also expressed in bone marrow, liver, lung, spleen and erythrocytes (at protein level). Expressed in myoblasts (at protein level). Expressed in red blood cells. Expressed in cochlear inner and outer hair cells (IHCs and OHCs) and vestibular organ HCs.

Its subcellular location is the endoplasmic reticulum membrane. It is found in the endoplasmic reticulum-Golgi intermediate compartment membrane. The protein localises to the cell membrane. The protein resides in the cell projection. It localises to the lamellipodium membrane. It catalyses the reaction K(+)(in) = K(+)(out). The enzyme catalyses Na(+)(in) = Na(+)(out). The catalysed reaction is Ca(2+)(in) = Ca(2+)(out). It carries out the reaction Mg(2+)(in) = Mg(2+)(out). Regulated by auxillary subunits MDFIC and MDFI. Down-regulated by phosphatidylserines exposed on the cell surface. Divalent ions decrease the single-channel permeability of K(+). Functionally, pore-forming subunit of the mechanosensitive non-specific cation Piezo channel required for rapidly adapting mechanically activated (MA) currents and has a key role in sensing touch and tactile pain. Piezo channels are homotrimeric three-blade propeller-shaped structures that utilize a cap-motion and plug-and-latch mechanism to gate their ion-conducting pathways. Generates currents characterized by a linear current-voltage relationship that are sensitive to ruthenium red and gadolinium. Conductance to monovalent alkali ions is highest for K(+), intermediate for Na(+) and lowest for Li(+). Divalent ions except for Mn(2+) permeate the channel but more slowly than the monovalent ions and they also reduce K(+) currents. Plays a key role in epithelial cell adhesion by maintaining integrin activation through R-Ras recruitment to the ER, most probably in its activated state, and subsequent stimulation of calpain signaling. In inner ear hair cells, PIEZO1/2 subunits may constitute part of the mechanotransducer (MET) non-selective cation channel complex where they may act as pore-forming ion-conducting component in the complex. In the kidney, may contribute to the detection of intraluminal pressure changes and to urine flow sensing. Acts as a shear-stress sensor that promotes endothelial cell organization and alignment in the direction of blood flow through calpain activation. Plays a key role in blood vessel formation and vascular structure in both development and adult physiology. Acts as a sensor of phosphatidylserine (PS) flipping at the plasma membrane and governs morphogenesis of muscle cells. In myoblasts, flippase-mediated PS enrichment at the inner leaflet of plasma membrane triggers channel activation and Ca(2+) influx followed by Rho GTPases signal transduction, leading to assembly of cortical actomyosin fibers and myotube formation. In Mus musculus (Mouse), this protein is Piezo-type mechanosensitive ion channel component 1.